The sequence spans 349 residues: Serine/threonine-protein kinase SRK2A (349 aa).

The 257-residue stretch at 12–268 (YELVKDIGSG…IQEIKNHEWF (257 aa)) folds into the Protein kinase domain. Residues 18-26 (IGSGNFGVA) and Lys41 contribute to the ATP site. Asp131 functions as the Proton acceptor in the catalytic mechanism. Residues 151–177 (DFGYSKSSLLHSQPKSTVGTPAYIAPE) are activation loop.

It belongs to the protein kinase superfamily. Ser/Thr protein kinase family.

The enzyme catalyses L-seryl-[protein] + ATP = O-phospho-L-seryl-[protein] + ADP + H(+). It carries out the reaction L-threonyl-[protein] + ATP = O-phospho-L-threonyl-[protein] + ADP + H(+). Its activity is regulated as follows. Activated by osmotic stress and by abscisic acid (ABA). Activation by NaCl is dependent on ABA. Functionally, involved in early responses to osmotic stress. The chain is Serine/threonine-protein kinase SRK2A from Physcomitrium patens (Spreading-leaved earth moss).